The chain runs to 393 residues: MNISTIRKDFMIVNMGPHHPSMHGVLRLIVTLDGEDVIDCEPILGYLHRGMEKIAENRTIIQYLPYVTRWDYLATMFTEAITVNGPEQLGNIQVPKRASYIRVIMLELSRIASHLLWLGPFMADIGAQTPFFYIFREREFIYDLFEAATGMRMMHNFFRIGGVATDLPYGWVDKCSDFCDYFLTSIAEYQKLITRNPIFLERVEGVGVVDVKEVINWGLSGPMLRASGIQWDLRKVDNYECYEEFHWEVQWQKEGDSLARYLVRIGEMVESIKIIQQALEGLPGGPYENLEIRCFDREKEPEWNEFEYRFISKKSSPSFELPKQELYVRIEAPKGELGIFIIGDQNGFPWRWKIHPPGFINLQILPQLVKRMKLADIMTILGSIDIIMGEVDR.

It belongs to the complex I 49 kDa subunit family. As to quaternary structure, NDH is composed of at least 16 different subunits, 5 of which are encoded in the nucleus.

The protein localises to the plastid. It localises to the chloroplast thylakoid membrane. It carries out the reaction a plastoquinone + NADH + (n+1) H(+)(in) = a plastoquinol + NAD(+) + n H(+)(out). The catalysed reaction is a plastoquinone + NADPH + (n+1) H(+)(in) = a plastoquinol + NADP(+) + n H(+)(out). Its function is as follows. NDH shuttles electrons from NAD(P)H:plastoquinone, via FMN and iron-sulfur (Fe-S) centers, to quinones in the photosynthetic chain and possibly in a chloroplast respiratory chain. The immediate electron acceptor for the enzyme in this species is believed to be plastoquinone. Couples the redox reaction to proton translocation, and thus conserves the redox energy in a proton gradient. The protein is NAD(P)H-quinone oxidoreductase subunit H, chloroplastic of Phaseolus vulgaris (Kidney bean).